An 81-amino-acid polypeptide reads, in one-letter code: Acyl carrier protein (81 aa).

One can recognise a Carrier domain in the interval 2–80 (ASEQEILSGL…DAVAYISQAQ (79 aa)). Position 40 is an O-(pantetheine 4'-phosphoryl)serine (Ser-40).

The protein belongs to the acyl carrier protein (ACP) family. Post-translationally, 4'-phosphopantetheine is transferred from CoA to a specific serine of apo-ACP by AcpS. This modification is essential for activity because fatty acids are bound in thioester linkage to the sulfhydryl of the prosthetic group.

Its subcellular location is the cytoplasm. The protein operates within lipid metabolism; fatty acid biosynthesis. In terms of biological role, carrier of the growing fatty acid chain in fatty acid biosynthesis. This Kineococcus radiotolerans (strain ATCC BAA-149 / DSM 14245 / SRS30216) protein is Acyl carrier protein.